We begin with the raw amino-acid sequence, 396 residues long: GDSL esterase/lipase ACHE (396 aa).

Residues 1–31 (MATAATATAGSRAAVLLLLSLALALALRPSD) form the signal peptide. S49 acts as the Nucleophile in catalysis. N108, N126, N151, N196, and N339 each carry an N-linked (GlcNAc...) asparagine glycan. Residues D359 and H362 contribute to the active site.

Belongs to the 'GDSL' lipolytic enzyme family.

Its subcellular location is the secreted. Functionally, esterase that can hydrolyze acetylthiocholine and propionylthiocholine in vitro. Substrate preference is propionylthiocholine &gt; acetylthiocholine. Possesses extremely low activity against butyrylthiocholine. In Zea mays (Maize), this protein is GDSL esterase/lipase ACHE.